Here is a 368-residue protein sequence, read N- to C-terminus: 3-dehydroquinate synthase (368 aa).

Residues 109–113 (GVIGD), 133–134 (TS), K146, K155, and 173–176 (TLQT) each bind NAD(+). Zn(2+)-binding residues include E188, H253, and H270.

It belongs to the sugar phosphate cyclases superfamily. Dehydroquinate synthase family. It depends on Co(2+) as a cofactor. The cofactor is Zn(2+). NAD(+) serves as cofactor.

Its subcellular location is the cytoplasm. The enzyme catalyses 7-phospho-2-dehydro-3-deoxy-D-arabino-heptonate = 3-dehydroquinate + phosphate. Its pathway is metabolic intermediate biosynthesis; chorismate biosynthesis; chorismate from D-erythrose 4-phosphate and phosphoenolpyruvate: step 2/7. Functionally, catalyzes the conversion of 3-deoxy-D-arabino-heptulosonate 7-phosphate (DAHP) to dehydroquinate (DHQ). The chain is 3-dehydroquinate synthase from Synechococcus sp. (strain ATCC 27144 / PCC 6301 / SAUG 1402/1) (Anacystis nidulans).